The primary structure comprises 305 residues: Putative S-adenosyl-L-methionine-dependent methyltransferase MAB_3787 (305 aa).

Residues D132 and 161–162 (DL) each bind S-adenosyl-L-methionine.

It belongs to the UPF0677 family.

Functionally, exhibits S-adenosyl-L-methionine-dependent methyltransferase activity. This is Putative S-adenosyl-L-methionine-dependent methyltransferase MAB_3787 from Mycobacteroides abscessus (strain ATCC 19977 / DSM 44196 / CCUG 20993 / CIP 104536 / JCM 13569 / NCTC 13031 / TMC 1543 / L948) (Mycobacterium abscessus).